The following is a 459-amino-acid chain: tRNA modification GTPase MnmE (459 aa).

Residues Arg-23, Glu-86, and Arg-125 each contribute to the (6S)-5-formyl-5,6,7,8-tetrahydrofolate site. A TrmE-type G domain is found at 221-380 (GIDAVIIGKP…LENAITELFV (160 aa)). Asn-231 lines the K(+) pocket. GTP is bound by residues 231-236 (NVGKSS), 250-256 (TDIPGTT), and 275-278 (DTAG). Residue Ser-235 coordinates Mg(2+). Thr-250, Ile-252, and Thr-255 together coordinate K(+). Thr-256 provides a ligand contact to Mg(2+). Lys-459 provides a ligand contact to (6S)-5-formyl-5,6,7,8-tetrahydrofolate.

Belongs to the TRAFAC class TrmE-Era-EngA-EngB-Septin-like GTPase superfamily. TrmE GTPase family. In terms of assembly, homodimer. Heterotetramer of two MnmE and two MnmG subunits. It depends on K(+) as a cofactor.

The protein localises to the cytoplasm. Functionally, exhibits a very high intrinsic GTPase hydrolysis rate. Involved in the addition of a carboxymethylaminomethyl (cmnm) group at the wobble position (U34) of certain tRNAs, forming tRNA-cmnm(5)s(2)U34. In Acetivibrio thermocellus (strain ATCC 27405 / DSM 1237 / JCM 9322 / NBRC 103400 / NCIMB 10682 / NRRL B-4536 / VPI 7372) (Clostridium thermocellum), this protein is tRNA modification GTPase MnmE.